The following is a 211-amino-acid chain: Holliday junction branch migration complex subunit RuvA (211 aa).

The segment at 1 to 63 (MIASLRGTVI…EDSQTLYVFK (63 aa)) is domain I. The interval 64–142 (DADEKRAFAT…DLGEIADTGA (79 aa)) is domain II. The tract at residues 143–157 (VGAAGAVGDGGDGQA) is flexible linker. The segment at 158 to 211 (VAPDVREQVLEALVGLGFTESKAGTTIEAVLSQWSAPQAPDASGLLRASLAAIK) is domain III.

Belongs to the RuvA family. As to quaternary structure, homotetramer. Forms an RuvA(8)-RuvB(12)-Holliday junction (HJ) complex. HJ DNA is sandwiched between 2 RuvA tetramers; dsDNA enters through RuvA and exits via RuvB. An RuvB hexamer assembles on each DNA strand where it exits the tetramer. Each RuvB hexamer is contacted by two RuvA subunits (via domain III) on 2 adjacent RuvB subunits; this complex drives branch migration. In the full resolvosome a probable DNA-RuvA(4)-RuvB(12)-RuvC(2) complex forms which resolves the HJ.

Its subcellular location is the cytoplasm. Its function is as follows. The RuvA-RuvB-RuvC complex processes Holliday junction (HJ) DNA during genetic recombination and DNA repair, while the RuvA-RuvB complex plays an important role in the rescue of blocked DNA replication forks via replication fork reversal (RFR). RuvA specifically binds to HJ cruciform DNA, conferring on it an open structure. The RuvB hexamer acts as an ATP-dependent pump, pulling dsDNA into and through the RuvAB complex. HJ branch migration allows RuvC to scan DNA until it finds its consensus sequence, where it cleaves and resolves the cruciform DNA. The chain is Holliday junction branch migration complex subunit RuvA from Corynebacterium jeikeium (strain K411).